The following is a 206-amino-acid chain: Oligoribonuclease (206 aa).

One can recognise an Exonuclease domain in the interval 20–183; it reads LVWLDMEMTG…ADIHESIDEL (164 aa). Residue tyrosine 141 is part of the active site.

This sequence belongs to the oligoribonuclease family.

The protein resides in the cytoplasm. 3'-to-5' exoribonuclease specific for small oligoribonucleotides. In Burkholderia ambifaria (strain ATCC BAA-244 / DSM 16087 / CCUG 44356 / LMG 19182 / AMMD) (Burkholderia cepacia (strain AMMD)), this protein is Oligoribonuclease.